The following is a 419-amino-acid chain: MTTQLEQAWELAKQRFAAVGIDVEEALRQLDRLPVSMHCWQGDDVSGFENPEGSLTGGIQATGNYPGKARNGSELRADLEQAMRLIPGPKRLNLHAIYLESDTPVARDQIKPEHFKNWVEWAKANQLGLDFNPSCFSHPLSADGFTLSHADDSIRQFWIDHCKASRRVSAYFGEQLGTPSVMNIWIPDGMKDITVDRLAPRQRLLAALDEVISEKLDPAHHIDAVESKLFGIGAESYTVGSNEFYMGYATSRQTALCLDAGHFHPTEVISDKISAAMLYVPQLLLHVSRPVRWDSDHVVLLDDETQAIASEIVRHDLFDRVHIGLDFFDASINRIAAWVIGTRNMKKALLRALLEPTAELRKLEAAGDYSARLALLEEQKSLPWQAVWEMYCQRHDTPAGSEWLESVRAYEKEILSQRG.

His262, Asp294, and Asp296 together coordinate Mn(2+).

This sequence belongs to the rhamnose isomerase family. Homotetramer. The cofactor is Mn(2+).

It localises to the cytoplasm. The catalysed reaction is L-rhamnopyranose = L-rhamnulose. It functions in the pathway carbohydrate degradation; L-rhamnose degradation; glycerone phosphate from L-rhamnose: step 1/3. Its function is as follows. Catalyzes the interconversion of L-rhamnose and L-rhamnulose. The chain is L-rhamnose isomerase from Escherichia coli O17:K52:H18 (strain UMN026 / ExPEC).